The sequence spans 123 residues: Alpha-ketoglutarate dehydrogenase subunit 4, mitochondrial (123 aa).

The N-terminal 8 residues, 1 to 8 (MIATPIRL), are a transit peptide targeting the mitochondrion.

Belongs to the alpha-ketoglutarate dehydrogenase component 4 family. Component of the 2-oxoglutarate dehydrogenase complex (OGDC), also called alpha-ketoglutarate dehydrogenase (KGDH) complex. The copmplex is composed of the catalytic subunits OGDH (2-oxoglutarate dehydrogenase KGD1; also called E1 subunit), DLST (dihydrolipoamide succinyltransferase KGD2; also called E2 subunit) and DLD (dihydrolipoamide dehydrogenase LPD1; also called E3 subunit), and the assembly factor KGD4. Within OGDC, interacts (via N-terminus) with E3 subunit and (via C-terminus) with the complex core formed by E1 and E2 subunits.

The protein localises to the mitochondrion. Its function is as follows. Molecular adapter that is necessary to a form a stable 2-oxoglutarate dehydrogenase enzyme complex (OGDC). Required for incorporation of the E3 subunit (LPD1) into the E1-E2 core (KGD1-KGD2) of mitochondrial OGDC, and acting as a stability factor for the fully assembled complex. The chain is Alpha-ketoglutarate dehydrogenase subunit 4, mitochondrial from Saccharomyces cerevisiae (strain ATCC 204508 / S288c) (Baker's yeast).